The following is a 104-amino-acid chain: Acetylcholine receptor subunit alpha (104 aa).

At 1 to 104 (NPPAIFKSYC…YFIVNVIIPC (104 aa)) the chain is on the extracellular side. Intrachain disulfides connect Cys-10/Cys-24 and Cys-74/Cys-75. N-linked (GlcNAc...) asparagine glycosylation is present at Asn-23.

This sequence belongs to the ligand-gated ion channel (TC 1.A.9) family. Acetylcholine receptor (TC 1.A.9.1) subfamily. Alpha-1/CHRNA1 sub-subfamily. In terms of assembly, one of the alpha chains that assemble within the acetylcholine receptor, a pentamer of two alpha chains, a beta, a delta, and a gamma or epsilon chains.

The protein resides in the postsynaptic cell membrane. Its subcellular location is the cell membrane. It carries out the reaction K(+)(in) = K(+)(out). It catalyses the reaction Na(+)(in) = Na(+)(out). In terms of biological role, upon acetylcholine binding, the AChR responds by an extensive change in conformation that affects all subunits and leads to opening of an ion-conducting channel across the plasma membrane. The protein is Acetylcholine receptor subunit alpha (CHRNA1) of Naja naja (Indian cobra).